The following is a 60-amino-acid chain: Myrmicitoxin(1)-Pr4c (60 aa).

The signal sequence occupies residues 1-23 (MKAIIFLFAVLTVVAIIIPIISG). Positions 24 to 33 (EPNAGPHAAS) are excised as a propeptide. At glutamine 59 the chain carries Glutamine amide.

It belongs to the formicidae venom clade 2 family. In terms of tissue distribution, expressed by the venom gland.

It is found in the secreted. Functionally, toxin that causes a rapid and irreversible paralysis when intrathoracically injected into insects (blowflies). Does not cause spontaneous nocifensive behaviors by intraplantar injection in mice. This Pogonomyrmex rugosus (Desert harvester ant) protein is Myrmicitoxin(1)-Pr4c.